The chain runs to 138 residues: Large ribosomal subunit protein uL16 (138 aa).

This sequence belongs to the universal ribosomal protein uL16 family. As to quaternary structure, part of the 50S ribosomal subunit.

Functionally, binds 23S rRNA and is also seen to make contacts with the A and possibly P site tRNAs. This Gluconobacter oxydans (strain 621H) (Gluconobacter suboxydans) protein is Large ribosomal subunit protein uL16.